The primary structure comprises 456 residues: Short chain dehydrogenase tazN (456 aa).

Residues Val45, Asp99, Asn126, Arg160, Tyr195, Lys199, and Thr229 each contribute to the NADP(+) site. The active-site Proton donor is the Tyr195. The Lowers pKa of active site Tyr role is filled by Lys199.

It belongs to the short-chain dehydrogenases/reductases (SDR) family.

It participates in secondary metabolite biosynthesis. Short chain dehydrogenase; part of the gene cluster that mediates the biosynthesis of azaterrilone A and other azaphilones, a class of fungal metabolites characterized by a highly oxygenated pyrano-quinone bicyclic core and exhibiting a broad range of bioactivities. The first step of the pathway begins with the non-reducing polyketide synthase tazA that assembles one acetyl-CoA starter unit, five malonyl-CoA units, and catalyzes a series of Claisen condensations, methylation, PT-mediated cyclization, and finally releases the first hexaketide precursor through the R-domain. The tazA product then undergoes reduction on its terminal ketone and the following pyran-ring formation by yet undetermined enzyme(s). Dehydration and enoyl reduction, possibly involving the trans-enoyl reductase tazE leads to the next intermediate. TazD is predicted as an acetyltransferase and might catalyze the acetylation steps leading to the synthesis of azaterrilone A. Azaterrilone A is not the final product of the taz pathway and both the highly reducing polyketide synthase tazB and the dual enzyme tazHJ catalyze late steps of the pathway, leading to the production of the 2 final stereoisomers that contain additional polyketide modification whose structures have still to be determined. The chain is Short chain dehydrogenase tazN from Aspergillus terreus (strain NIH 2624 / FGSC A1156).